The primary structure comprises 129 residues: Protein FYV12 (129 aa).

The N-linked (GlcNAc...) asparagine glycan is linked to Asn91. The chain crosses the membrane as a helical span at residues 109-128 (LMTTFLLYVLYVCIYISAFI).

It localises to the membrane. In terms of biological role, involved in K1 killer toxin resistance. The protein is Protein FYV12 (FYV12) of Saccharomyces cerevisiae (strain ATCC 204508 / S288c) (Baker's yeast).